We begin with the raw amino-acid sequence, 454 residues long: uncharacterized protein (454 aa).

Residues 1–45 form the TRAM domain; it reads MAAEGKAIAKVNDLVIFVPYVVPGDVVDLQIKRKKNKYAEAEAVK. 4 residues coordinate [4Fe-4S] cluster: C58, C64, C67, and C160. Residues Q286, Y315, E336, and D385 each coordinate S-adenosyl-L-methionine. Catalysis depends on C412, which acts as the Nucleophile.

It belongs to the class I-like SAM-binding methyltransferase superfamily. RNA M5U methyltransferase family.

This is an uncharacterized protein from Bacteroides thetaiotaomicron (strain ATCC 29148 / DSM 2079 / JCM 5827 / CCUG 10774 / NCTC 10582 / VPI-5482 / E50).